Here is a 417-residue protein sequence, read N- to C-terminus: Carbohydrate sulfotransferase 8 (417 aa).

Residues 1–10 (MTPRLGTMRL) lie on the Cytoplasmic side of the membrane. Residues 11 to 31 (ACMFSSILLFGAAGLLLFISL) form a helical; Signal-anchor for type II membrane protein membrane-spanning segment. The Lumenal portion of the chain corresponds to 32-417 (QDPIELSPQQ…NYSKPFSDLY (386 aa)). Residues 47-101 (FSIRPQQPQHDSHLRISTEKGTRDSPSGSPRGLQLQAPDQPRPHPKAAGSPLRLR) are disordered. Basic and acidic residues predominate over residues 56–69 (HDSHLRISTEKGTR). N-linked (GlcNAc...) asparagine glycosylation is found at Asn121 and Asn122. 3'-phosphoadenylyl sulfate contacts are provided by residues 191–197 (PKAGCSN) and 251–259 (REPFERLVS). Residues Asn287, Asn360, and Asn408 are each glycosylated (N-linked (GlcNAc...) asparagine).

This sequence belongs to the sulfotransferase 2 family. As to expression, strongly expressed in brain. Weakly expressed in lung and kidney. Weakly expressed in pituitary.

The protein localises to the golgi apparatus membrane. In terms of biological role, catalyzes the transfer of sulfate to position 4 of non-reducing N-acetylgalactosamine (GalNAc) residues in both N-glycans and O-glycans. Required for biosynthesis of glycoprotein hormones lutropin and thyrotropin, by mediating sulfation of their carbohydrate structures. Only active against terminal GalNAcbeta1,GalNAcbeta. Not active toward chondroitin. The polypeptide is Carbohydrate sulfotransferase 8 (Chst8) (Mus musculus (Mouse)).